The sequence spans 382 residues: ATP phosphoribosyltransferase regulatory subunit (382 aa).

Belongs to the class-II aminoacyl-tRNA synthetase family. HisZ subfamily. Heteromultimer composed of HisG and HisZ subunits.

It localises to the cytoplasm. It participates in amino-acid biosynthesis; L-histidine biosynthesis; L-histidine from 5-phospho-alpha-D-ribose 1-diphosphate: step 1/9. In terms of biological role, required for the first step of histidine biosynthesis. May allow the feedback regulation of ATP phosphoribosyltransferase activity by histidine. This Burkholderia cenocepacia (strain HI2424) protein is ATP phosphoribosyltransferase regulatory subunit.